The following is a 288-amino-acid chain: Allergen Asp f 7 homolog (288 aa).

The signal sequence occupies residues 1–20 (MAPQFLKALTVATALGATLA). 2 stretches are compositionally biased toward low complexity: residues 48 to 107 (TVHG…SSSV) and 117 to 129 (TTST…TTST). Positions 48-161 (TVHGTPGPDY…PPVVSIPPIG (114 aa)) are disordered. The segment covering 130 to 151 (TPPPPPPAMTTPPPPPPPPATK) has biased composition (pro residues). N-linked (GlcNAc...) asparagine glycosylation is present at Asn268.

It is found in the secreted. The chain is Allergen Asp f 7 homolog from Arthroderma benhamiae (strain ATCC MYA-4681 / CBS 112371) (Trichophyton mentagrophytes).